Reading from the N-terminus, the 200-residue chain is NADH-quinone oxidoreductase chain 10 (200 aa).

5 helical membrane-spanning segments follow: residues 2–22, 26–46, 51–71, 90–110, and 144–164; these read MTFAFYLFAISACVAGFMVVI, PVHSVLWLILAFLSAAGLFVL, FVAMLLVVVYVGAVAVLFLFV, LPLALVIGVVLLAQLGIAFSG, and VLMFQLAGLVLLVAMIGAIVL.

The protein belongs to the complex I subunit 6 family. As to quaternary structure, NDH-1 is composed of at least 14 different subunits, Nqo1 to Nqo14. The complex has a L-shaped structure, with the hydrophobic arm (subunits Nqo7, Nqo8, Nqo10 to Nqo14) embedded in the inner membrane and the hydrophilic peripheral arm (subunits Nqo1 to Nqo6, Nqo9) protruding into the bacterial cytoplasm. The hydrophilic domain contains all the redox centers.

The protein localises to the cell inner membrane. It carries out the reaction a quinone + NADH + 5 H(+)(in) = a quinol + NAD(+) + 4 H(+)(out). Functionally, NDH-1 shuttles electrons from NADH, via FMN and iron-sulfur (Fe-S) centers, to quinones in the respiratory chain. The immediate electron acceptor for the enzyme in this species is believed to be ubiquinone. Couples the redox reaction to proton translocation (for every two electrons transferred, four hydrogen ions are translocated across the cytoplasmic membrane), and thus conserves the redox energy in a proton gradient. The chain is NADH-quinone oxidoreductase chain 10 from Paracoccus denitrificans.